Here is a 678-residue protein sequence, read N- to C-terminus: Zinc finger protein 334 (678 aa).

The KRAB domain maps to 8–79 (VSFQDLTVNF…EEFSNQNYPE (72 aa)). 14 consecutive C2H2-type zinc fingers follow at residues 235-257 (NEPCECRKTFSKRSTLVVHQRIH), 263-285 (YVCNDCRKTFRVKTSLTRHQRIH), 291-313 (YECSECGKTFIDKSALIVHQKIH), 319-341 (YECNECGKTFFRKSALAEHFRSH), 347-369 (YECKECGNAFSKKSYLVVHQRTH), 375-397 (NECKECGKTFFCQSALTAHQRIH), 403-425 (YECSECEKTFFCQSALNVHRRSH), 431-453 (YECSQCGKFLCTKSALIAHQITH), 459-481 (YECNECGKFFCHKSTLTIHQRTH), 542-564 (YECNECGRTYCRKSALTHHQRTH), 570-592 (YECNECGKTFCQKFSFVEHQRTH), 598-620 (YERNECGKSFCHKSAFRVHRRIH), 626-648 (YECNQCGKTYRRLWTLTEHQKIH), and 654-676 (YECNKCEKTFRHKSNFLLHQKSH).

This sequence belongs to the krueppel C2H2-type zinc-finger protein family.

The protein localises to the nucleus. Its function is as follows. May be involved in transcriptional regulation. The polypeptide is Zinc finger protein 334 (ZNF334) (Pongo abelii (Sumatran orangutan)).